Reading from the N-terminus, the 486-residue chain is MGDNGDGGEKKELKENVKKGKELGRQAIGEGYINPSLQLARRLISLGVNVTFATTVLAGRRMKNKTHQTATTPGLSFATFSDGFDDETLKPNGDLTHYFSELRRCGSESLTHLITSAANEGRPITFVIYSLLLSWAADIASTYDIPSALFFAQPATVLALYFYYFHGYGDTICSKLQDPSSYIELPGLPLLTSQDMPSFFSPSGPHAFILPPMREQAEFLGRQSQPKVLVNTFDALEADALRAIDKLKMLAIGPLIPSALLGGNDSSDASFCGDLFQVSSEDYIEWLNSKPDSSVVYISVGSICVLSDEQEDELVHALLNSGHTFLWVKRSKENNEGVKQETDEEKLKKLEEQGKMVSWCRQVEVLKHPALGCFLTHCGWNSTIESLVSGLPVVAFPQQIDQATNAKLIEDVWKTGVRVKANTEGIVEREEIRRCLDLVMGSRDGQKEEIERNAKKWKELARQAIGEGGSSDSNLKTFLWEIDLEI.

Residues S302, C360, Q362, W380, N381, S382, E385, D401, and Q402 each coordinate UDP-alpha-D-glucose.

The protein belongs to the UDP-glycosyltransferase family. As to expression, highly expressed in young fruits 15 days after anthesis (15-DAA).

The enzyme catalyses mogrol + UDP-alpha-D-glucose = mogroside IE + UDP + H(+). It catalyses the reaction mogroside I-A1 + UDP-alpha-D-glucose = mogroside IIE + UDP + H(+). The catalysed reaction is mogroside II-A1 + UDP-alpha-D-glucose = mogroside IIIX + UDP + H(+). It carries out the reaction mogroside II-A + UDP-alpha-D-glucose = mogroside III + UDP + H(+). Its pathway is secondary metabolite biosynthesis; terpenoid biosynthesis. In terms of biological role, UDP-glycosyltransferase involved in the biosynthesis of cucurbitacin and mogroside tetracyclic triterpene natural products (e.g. siamenoside I and mogrosides IV, V and VI). Cucurbitacins have cytotoxic properties and exhibit deterrent taste as a defense barrier against herbivores. Mogrosides are nonsugar highly oxygenated compounds used as high-intensity zero-calorie sweeteners; they also possess pharmacological properties such as regulating immunity, lowering blood sugar and lipid levels, protecting the liver, and acting as antioxidants and antitumor agents. Catalyzes the C3 primary glucosylation of mogrol, mogroside I-A1, mogroside II-A1 and mogroside II-A. The protein is Mogroside I-E synthase of Siraitia grosvenorii (Monk's fruit).